The sequence spans 956 residues: Lon protease homolog, mitochondrial 1 (956 aa).

Disordered regions lie at residues 37–57 and 83–123; these read NNNN…NNNN and KKKG…GNEK. Residues 91–123 show a composition bias toward basic and acidic residues; that stretch reads NNDDNDNEKNEKNEKKVKNEKKEKNEKNDGNEK. In terms of domain architecture, Lon N-terminal spans 159–357; the sequence is VVIYPSNSVN…MLYHMILNEQ (199 aa). 511-518 is an ATP binding site; it reads GPPGTGKT. One can recognise a Lon proteolytic domain in the interval 747-945; the sequence is VTPIGVVNGL…KDVFEVAFPN (199 aa). A compositionally biased stretch (low complexity) spans 777-795; that stretch reads KPLSSLPPSQQQQNQLEPS. Residues 777–800 form a disordered region; sequence KPLSSLPPSQQQQNQLEPSIKTTG. Catalysis depends on residues Ser851 and Lys894.

This sequence belongs to the peptidase S16 family. In terms of assembly, homohexamer or homoheptamer. Organized in a ring with a central cavity.

Its subcellular location is the mitochondrion matrix. The catalysed reaction is Hydrolysis of proteins in presence of ATP.. Functionally, ATP-dependent serine protease that mediates the selective degradation of misfolded, unassembled or oxidatively damaged polypeptides as well as certain short-lived regulatory proteins in the mitochondrial matrix. May also have a chaperone function in the assembly of inner membrane protein complexes. Participates in the regulation of mitochondrial gene expression and in the maintenance of the integrity of the mitochondrial genome. Binds to mitochondrial DNA in a site-specific manner. This is Lon protease homolog, mitochondrial 1 from Dictyostelium discoideum (Social amoeba).